The primary structure comprises 110 residues: UPF0102 protein HH_1751 (110 aa).

This sequence belongs to the UPF0102 family.

In Helicobacter hepaticus (strain ATCC 51449 / 3B1), this protein is UPF0102 protein HH_1751.